A 572-amino-acid chain; its full sequence is MDPRAPRRRHTHQRGYLLTRDPHLNKDLAFTLEERQQLKIHGLLPPCIVNQEIQVLRVIKNFERLNSDFDRYLLLMDLQDRNEKLFYSVLMSNVEKFMPIVYTPTVGLACQQYSLAFRKPRGLFISIHDKGHIASVLNAWPEDVVKAIVVTDGERILGLGDLGCNGMGIPVGKLALYTACGGVNPQQCLPITLDVGTENEELLKDPLYIGLRHRRVRGPEYDAFLDEFMEAASSKYGMNCLIQFEDFANLNAFRLLNKYRNKYCTFNDDIQGTASVAVAGLLAALRITKNKLSDQTVLFQGAGEAALGIAHLIVMAMEKEGLSKEKARQKIWLVDSKGLIVKGRASLTEEKEVFAHEHEEMKNLEAIVQKIKPTALIGVAAIGGAFTEQILKDMAAFNERPIIFALSNPTSKAECSAEECYKVTKGRAIFASGSPFDPVTLPDGRTLFPGQGNNSYVFPGVALGVVACGLRHINDSVFLTTAEVISQQVSDKHLEEGRLYPPLNTIRDVSLKIAVKIVQDAYKEKMATVYPEPQNKEEFVSSQMYSTNYDQILPDCYSWPEEVQKIQTKVNQ.

M1 carries the N-acetylmethionine modification. Y102 serves as the catalytic Proton donor. R155 contributes to the NADP(+) binding site. K173 (proton acceptor) is an active-site residue. 3 residues coordinate a divalent metal cation: E245, D246, and D269. NADP(+) is bound by residues D269 and 301-318; that span reads GAGE…MAME. At S336 the chain carries Phosphoserine. N408 contacts NADP(+).

The protein belongs to the malic enzymes family. In terms of assembly, homotetramer. The cofactor is Mg(2+). Requires Mn(2+) as cofactor. Ubiquitous. Up-regulated by 3,5,3'-triiodo-L-thyronine in the liver, kidney and heart.

The protein localises to the cytoplasm. It carries out the reaction (S)-malate + NADP(+) = pyruvate + CO2 + NADPH. The enzyme catalyses oxaloacetate + H(+) = pyruvate + CO2. In terms of biological role, catalyzes the oxidative decarboxylation of (S)-malate in the presence of NADP(+) and divalent metal ions, and decarboxylation of oxaloacetate. This chain is NADP-dependent malic enzyme (Me1), found in Rattus norvegicus (Rat).